A 450-amino-acid polypeptide reads, in one-letter code: Interferon regulatory factor 4 (450 aa).

A DNA-binding region (IRF tryptophan pentad repeat) is located at residues 21-129; sequence NGKLRQWLID…DPYKVYRIVP (109 aa). 2 positions are modified to phosphoserine; by ROCK2: serine 446 and serine 447.

This sequence belongs to the IRF family. As to quaternary structure, interacts with SPIB and DEF6. Interacts with the BATF-JUNB heterodimer. Interacts with BATF (via bZIP domain); the interaction is direct. Directly interacts with NLRP3 in the nucleus of Th2 cells; this interaction enhances IRF4 ability to bind to the IL4 promoter and is required for optimal IRF4-dependent IL4 transcription. Interacts with SPI1. Post-translationally, phosphorylation by ROCK2 regulates IL-17 and IL-21 production. Lymphoid cells.

The protein resides in the nucleus. Its subcellular location is the cytoplasm. Transcriptional activator. Binds to the interferon-stimulated response element (ISRE) of the MHC class I promoter. Binds the immunoglobulin lambda light chain enhancer, together with PU.1. Probably plays a role in ISRE-targeted signal transduction mechanisms specific to lymphoid cells. Involved in CD8(+) dendritic cell differentiation by forming a complex with the BATF-JUNB heterodimer in immune cells, leading to recognition of AICE sequence (5'-TGAnTCA/GAAA-3'), an immune-specific regulatory element, followed by cooperative binding of BATF and IRF4 and activation of genes. The sequence is that of Interferon regulatory factor 4 from Mus musculus (Mouse).